We begin with the raw amino-acid sequence, 434 residues long: Enolase (434 aa).

A (2R)-2-phosphoglycerate-binding site is contributed by Gln-163. Glu-205 serves as the catalytic Proton donor. Residues Asp-242, Glu-289, and Asp-316 each contribute to the Mg(2+) site. Positions 341, 370, 371, and 392 each coordinate (2R)-2-phosphoglycerate. Lys-341 (proton acceptor) is an active-site residue.

This sequence belongs to the enolase family. Requires Mg(2+) as cofactor.

The protein resides in the cytoplasm. It localises to the secreted. The protein localises to the cell surface. The enzyme catalyses (2R)-2-phosphoglycerate = phosphoenolpyruvate + H2O. It participates in carbohydrate degradation; glycolysis; pyruvate from D-glyceraldehyde 3-phosphate: step 4/5. Its function is as follows. Catalyzes the reversible conversion of 2-phosphoglycerate (2-PG) into phosphoenolpyruvate (PEP). It is essential for the degradation of carbohydrates via glycolysis. This is Enolase from Lacticaseibacillus paracasei (strain ATCC 334 / BCRC 17002 / CCUG 31169 / CIP 107868 / KCTC 3260 / NRRL B-441) (Lactobacillus paracasei).